Here is a 470-residue protein sequence, read N- to C-terminus: Nuclear receptor subfamily 0 group B member 1 (470 aa).

Repeat copies occupy residues 1 to 67 (MAGE…YRCC), 68 to 133 (FCGK…YRCC), and 134 to 200 (FCGE…YRCC). The tract at residues 1–253 (MAGENHQWQG…RPVALKNPQV (253 aa)) is 4 X 67 AA tandem repeats. Short sequence motifs (LXXLL motif) lie at residues 13–17 (LYNML), 80–84 (LYSML), and 146–150 (LYSLL). The 4; truncated repeat unit spans residues 201 to 253 (FCGEDHPQQGSTLYCMPTSTNQAQAAPEERPRAPWWDASSGALRPVALKNPQV). The NR LBD domain occupies 215–469 (CMPTSTNQAQ…DMMLEMLCTK (255 aa)). The AF-2 motif signature appears at 461-466 (MMLEML).

This sequence belongs to the nuclear hormone receptor family. NR0 subfamily. Homodimer. Interacts with NR5A1, NR5A2, NR0B2 and with COPS2. Interacts with ESRRB; represses ESRRB activity at the GATA6 promoter.

It localises to the nucleus. The protein resides in the cytoplasm. Nuclear receptor that lacks a DNA-binding domain and acts as a corepressor that inhibits the transcriptional activity of other nuclear receptors through heterodimeric interactions. Component of a cascade required for the development of the hypothalamic-pituitary-adrenal-gonadal axis. May also have a role in the development of the embryo and in the maintenance of embryonic stem cell pluripotency. The sequence is that of Nuclear receptor subfamily 0 group B member 1 (NR0B1) from Pongo pygmaeus (Bornean orangutan).